The primary structure comprises 530 residues: UDP-N-acetylmuramoyl-L-alanyl-D-glutamate--2,6-diaminopimelate ligase (530 aa).

UDP-N-acetyl-alpha-D-muramoyl-L-alanyl-D-glutamate is bound at residue leucine 52. 139–145 (GTSGKTT) is an ATP binding site. UDP-N-acetyl-alpha-D-muramoyl-L-alanyl-D-glutamate contacts are provided by residues 181 to 182 (TT), serine 208, and arginine 216. An N6-carboxylysine modification is found at lysine 248. Meso-2,6-diaminopimelate is bound by residues arginine 410, 434-437 (DNPR), glycine 488, and glutamate 492. The Meso-diaminopimelate recognition motif signature appears at 434 to 437 (DNPR).

It belongs to the MurCDEF family. MurE subfamily. Mg(2+) is required as a cofactor. Post-translationally, carboxylation is probably crucial for Mg(2+) binding and, consequently, for the gamma-phosphate positioning of ATP.

The protein localises to the cytoplasm. It catalyses the reaction UDP-N-acetyl-alpha-D-muramoyl-L-alanyl-D-glutamate + meso-2,6-diaminopimelate + ATP = UDP-N-acetyl-alpha-D-muramoyl-L-alanyl-gamma-D-glutamyl-meso-2,6-diaminopimelate + ADP + phosphate + H(+). Its pathway is cell wall biogenesis; peptidoglycan biosynthesis. Its function is as follows. Catalyzes the addition of meso-diaminopimelic acid to the nucleotide precursor UDP-N-acetylmuramoyl-L-alanyl-D-glutamate (UMAG) in the biosynthesis of bacterial cell-wall peptidoglycan. This is UDP-N-acetylmuramoyl-L-alanyl-D-glutamate--2,6-diaminopimelate ligase from Mycobacterium leprae (strain TN).